Reading from the N-terminus, the 258-residue chain is Leucyl/phenylalanyl-tRNA--protein transferase (258 aa).

Residues 199-220 (GGSDGPAPDQSIGMSSSGGVSD) form a disordered region. Residues 209 to 220 (SIGMSSSGGVSD) are compositionally biased toward low complexity.

This sequence belongs to the L/F-transferase family.

It localises to the cytoplasm. It carries out the reaction N-terminal L-lysyl-[protein] + L-leucyl-tRNA(Leu) = N-terminal L-leucyl-L-lysyl-[protein] + tRNA(Leu) + H(+). The catalysed reaction is N-terminal L-arginyl-[protein] + L-leucyl-tRNA(Leu) = N-terminal L-leucyl-L-arginyl-[protein] + tRNA(Leu) + H(+). It catalyses the reaction L-phenylalanyl-tRNA(Phe) + an N-terminal L-alpha-aminoacyl-[protein] = an N-terminal L-phenylalanyl-L-alpha-aminoacyl-[protein] + tRNA(Phe). Functionally, functions in the N-end rule pathway of protein degradation where it conjugates Leu, Phe and, less efficiently, Met from aminoacyl-tRNAs to the N-termini of proteins containing an N-terminal arginine or lysine. The sequence is that of Leucyl/phenylalanyl-tRNA--protein transferase from Hyphomonas neptunium (strain ATCC 15444).